The chain runs to 182 residues: uncharacterized protein (182 aa).

Disordered stretches follow at residues 17-53 (AVSQAQGRPGHPDAPPNIYEGGLGSPQPQCPSAQGSK) and 128-159 (DSLGSSASSSSMDPDKGALPQPSPSRLRPKRS). Residues 42 to 53 (PQPQCPSAQGSK) are compositionally biased toward polar residues. The segment covering 129-138 (SLGSSASSSS) has biased composition (low complexity).

This is an uncharacterized protein from Homo sapiens (Human).